We begin with the raw amino-acid sequence, 545 residues long: CTP synthase (545 aa).

Residues 1–266 are amidoligase domain; that stretch reads MTTNYIFVTG…DDYICKRFSL (266 aa). Residue Ser-14 participates in CTP binding. Ser-14 contacts UTP. ATP contacts are provided by residues 15–20 and Asp-72; that span reads SLGKGI. Asp-72 and Glu-140 together coordinate Mg(2+). CTP contacts are provided by residues 147–149, 187–192, and Lys-223; these read DIE and KTKPTQ. UTP contacts are provided by residues 187–192 and Lys-223; that span reads KTKPTQ. ATP is bound at residue 239–241; the sequence is KDV. The Glutamine amidotransferase type-1 domain maps to 291 to 542; that stretch reads TIGMIGKYVE…VKAAGEYQKR (252 aa). Gly-352 contacts L-glutamine. Cys-379 acts as the Nucleophile; for glutamine hydrolysis in catalysis. L-glutamine is bound by residues 380 to 383, Glu-403, and Arg-470; that span reads LGMQ. Residues His-515 and Glu-517 contribute to the active site.

It belongs to the CTP synthase family. In terms of assembly, homotetramer.

It catalyses the reaction UTP + L-glutamine + ATP + H2O = CTP + L-glutamate + ADP + phosphate + 2 H(+). The catalysed reaction is L-glutamine + H2O = L-glutamate + NH4(+). The enzyme catalyses UTP + NH4(+) + ATP = CTP + ADP + phosphate + 2 H(+). It functions in the pathway pyrimidine metabolism; CTP biosynthesis via de novo pathway; CTP from UDP: step 2/2. With respect to regulation, allosterically activated by GTP, when glutamine is the substrate; GTP has no effect on the reaction when ammonia is the substrate. The allosteric effector GTP functions by stabilizing the protein conformation that binds the tetrahedral intermediate(s) formed during glutamine hydrolysis. Inhibited by the product CTP, via allosteric rather than competitive inhibition. In terms of biological role, catalyzes the ATP-dependent amination of UTP to CTP with either L-glutamine or ammonia as the source of nitrogen. Regulates intracellular CTP levels through interactions with the four ribonucleotide triphosphates. This Yersinia enterocolitica serotype O:8 / biotype 1B (strain NCTC 13174 / 8081) protein is CTP synthase.